The following is a 587-amino-acid chain: Aspartate--tRNA ligase (587 aa).

Glutamate 175 provides a ligand contact to L-aspartate. The tract at residues 199–202 (QQFK) is aspartate. L-aspartate-binding residues include arginine 221 and histidine 446. Position 221 to 223 (221 to 223 (RDE)) interacts with ATP. Glutamate 480 serves as a coordination point for ATP. Arginine 487 is a binding site for L-aspartate. 532-535 (GVDR) lines the ATP pocket.

Belongs to the class-II aminoacyl-tRNA synthetase family. Type 1 subfamily. In terms of assembly, homodimer.

The protein localises to the cytoplasm. The enzyme catalyses tRNA(Asp) + L-aspartate + ATP = L-aspartyl-tRNA(Asp) + AMP + diphosphate. In terms of biological role, catalyzes the attachment of L-aspartate to tRNA(Asp) in a two-step reaction: L-aspartate is first activated by ATP to form Asp-AMP and then transferred to the acceptor end of tRNA(Asp). The polypeptide is Aspartate--tRNA ligase (Streptomyces avermitilis (strain ATCC 31267 / DSM 46492 / JCM 5070 / NBRC 14893 / NCIMB 12804 / NRRL 8165 / MA-4680)).